Consider the following 1073-residue polypeptide: Error-prone DNA polymerase (1073 aa).

The tract at residues 41–73 (EAEPECLSTPRPGPGSTEVPGERRGSRQGERSG) is disordered. Basic and acidic residues predominate over residues 60-73 (PGERRGSRQGERSG).

This sequence belongs to the DNA polymerase type-C family. DnaE2 subfamily.

It is found in the cytoplasm. The catalysed reaction is DNA(n) + a 2'-deoxyribonucleoside 5'-triphosphate = DNA(n+1) + diphosphate. Its function is as follows. DNA polymerase involved in damage-induced mutagenesis and translesion synthesis (TLS). It is not the major replicative DNA polymerase. In Corynebacterium efficiens (strain DSM 44549 / YS-314 / AJ 12310 / JCM 11189 / NBRC 100395), this protein is Error-prone DNA polymerase.